We begin with the raw amino-acid sequence, 581 residues long: Rhodanese-like domain-containing protein 6 (581 aa).

The 101-residue stretch at 158–258 (ENKELVLLDA…YLEQFPSGGF (101 aa)) folds into the Rhodanese domain. Residue Cys216 is the Cysteine persulfide intermediate of the active site.

This chain is Rhodanese-like domain-containing protein 6 (STR6), found in Arabidopsis thaliana (Mouse-ear cress).